Consider the following 203-residue polypeptide: Pyridoxine/pyridoxamine 5'-phosphate oxidase (203 aa).

FMN-binding positions include 50–55 (RMVLLK), 65–66 (YT), Lys-72, and Gln-94. Lys-55 is a binding site for substrate. Tyr-112, Arg-116, and Ser-120 together coordinate substrate. Residues 129-130 (QS) and Trp-174 each bind FMN. 180–182 (RLH) is a substrate binding site. Arg-184 is a binding site for FMN.

It belongs to the pyridoxamine 5'-phosphate oxidase family. Homodimer. Requires FMN as cofactor.

It catalyses the reaction pyridoxamine 5'-phosphate + O2 + H2O = pyridoxal 5'-phosphate + H2O2 + NH4(+). The enzyme catalyses pyridoxine 5'-phosphate + O2 = pyridoxal 5'-phosphate + H2O2. Its pathway is cofactor metabolism; pyridoxal 5'-phosphate salvage; pyridoxal 5'-phosphate from pyridoxamine 5'-phosphate: step 1/1. The protein operates within cofactor metabolism; pyridoxal 5'-phosphate salvage; pyridoxal 5'-phosphate from pyridoxine 5'-phosphate: step 1/1. Its function is as follows. Catalyzes the oxidation of either pyridoxine 5'-phosphate (PNP) or pyridoxamine 5'-phosphate (PMP) into pyridoxal 5'-phosphate (PLP). In Brucella anthropi (strain ATCC 49188 / DSM 6882 / CCUG 24695 / JCM 21032 / LMG 3331 / NBRC 15819 / NCTC 12168 / Alc 37) (Ochrobactrum anthropi), this protein is Pyridoxine/pyridoxamine 5'-phosphate oxidase.